Here is a 302-residue protein sequence, read N- to C-terminus: Sulfate adenylyltransferase subunit 2 (302 aa).

This sequence belongs to the PAPS reductase family. CysD subfamily. As to quaternary structure, heterodimer composed of CysD, the smaller subunit, and CysN.

The enzyme catalyses sulfate + ATP + H(+) = adenosine 5'-phosphosulfate + diphosphate. The protein operates within sulfur metabolism; hydrogen sulfide biosynthesis; sulfite from sulfate: step 1/3. Its function is as follows. With CysN forms the ATP sulfurylase (ATPS) that catalyzes the adenylation of sulfate producing adenosine 5'-phosphosulfate (APS) and diphosphate, the first enzymatic step in sulfur assimilation pathway. APS synthesis involves the formation of a high-energy phosphoric-sulfuric acid anhydride bond driven by GTP hydrolysis by CysN coupled to ATP hydrolysis by CysD. In Xanthomonas axonopodis pv. citri (strain 306), this protein is Sulfate adenylyltransferase subunit 2.